Here is a 445-residue protein sequence, read N- to C-terminus: Retrovirus-related Pol polyprotein from type-1 retrotransposable element R2 (445 aa).

Residues 1 to 114 form the Reverse transcriptase domain; the sequence is QPSVFNLVKW…LSRDDSLAKA (114 aa). Residues 115-445 are nucleic acid-binding endonuclease; it reads MLASAGPAAE…GATPRQLIEY (331 aa). Basic residues predominate over residues 380-389; that stretch reads GPRPAHHHQP. A disordered region spans residues 380–445; that stretch reads GPRPAHHHQP…GATPRQLIEY (66 aa). Positions 396 to 405 are enriched in polar residues; that stretch reads ATANTGTLQS.

It catalyses the reaction DNA(n) + a 2'-deoxyribonucleoside 5'-triphosphate = DNA(n+1) + diphosphate. The chain is Retrovirus-related Pol polyprotein from type-1 retrotransposable element R2 from Popillia japonica (Japanese beetle).